The following is a 643-amino-acid chain: MRLVEIGALSADSDLVLWEASCETISHQISLKLARKEGGLMEIFNSVVASLPRKSDSFRFSAISSKTSWESAHRNLLENLTKTVPVLLENGWKKSPDFQKNSLIDLFSLLEDEDATRIFKMTQESRSITEDDVEDYFSMFDKKFDRLLTYGAPQFENCVRDSPMRQKYANLCVEVLVAVGASVKNAQKITDFLEKQSMKVSKIWMTRIPEIFEKITNFYDYPMMFDVAMALDGFPLRKVFLARRFALQSILEVFIEMAPNTKYKVRERVRQELEKASRFVGYASEMGHDNLLSSFSPKIVSSIEDSKHILEVETIERLRRCGYLENLGAPLDELVRAQIASIREILPHFSAEFVHLALRHFSYDSEVTLASLLSRENLPLELLRLENVELRAGIGSGEWPPLDFTASDEIEKLARADKRAKDEETRKNNETKSASNLFSLAPILSDRPPSPPVDQQAELRAHAEAYRTSVLTKLQKIRADAAGPSSPSEKIAVDAENLVPLATSKKYSALNSLKISEADKVAIRPTYNKYRYETPNDGGNGVYDDEYDDEFDGREFNIERLNQELETSSEEDEAGSSAPPGLSQPPPYQGSRGGRGGRGARGGNRGGAPSADGYTGGHDRQMKEKHKSDIKQRGADRKKRGVY.

Residues 561–643 form a disordered region; it reads LNQELETSSE…GADRKKRGVY (83 aa). The segment covering 591 to 606 has biased composition (gly residues); the sequence is SRGGRGGRGARGGNRG. The segment covering 617 to 635 has biased composition (basic and acidic residues); it reads GHDRQMKEKHKSDIKQRGA.

This is an uncharacterized protein from Caenorhabditis elegans.